Consider the following 855-residue polypeptide: Envelope glycoprotein gp160 (855 aa).

The N-terminal stretch at 1-31 (MTARGTRKNYQRLWRWGTMLLGMLMICSAAE) is a signal peptide. Residues 32–683 (NLWVTVYYGV…ITNWLWYIRI (652 aa)) are Extracellular-facing. Cys-53 and Cys-73 are oxidised to a cystine. Residues Asn-87, Asn-134, Asn-142, Asn-145, Asn-161, Asn-165, Asn-192, Asn-202, Asn-239, Asn-246, Asn-267, Asn-281, Asn-294, Asn-300, Asn-306, Asn-336, and Asn-359 are each glycosylated (N-linked (GlcNAc...) asparagine; by host). 5 disulfides stabilise this stretch: Cys-118–Cys-210, Cys-125–Cys-201, Cys-130–Cys-162, Cys-223–Cys-252, and Cys-233–Cys-244. A V1 region spans residues 130–161 (CTDVNTTSSSLRNATNTTSSSWETMEKGELKN). Positions 162 to 201 (CSFNTTTSIRDKMQEQYALFYKLDVLPIDKNDTKFRLIHC) are V2. Residues 301 to 334 (CTRPNNNTRNRISIGPGRAFHTTKQIIGDIRQAH) form a V3 region. Cys-301 and Cys-335 are disulfide-bonded. Positions 367 to 377 (SSGGDPEIVMH) are CD4-binding loop. 2 disulfides stabilise this stretch: Cys-381/Cys-442 and Cys-388/Cys-415. Residues 388–415 (CNTSQLFNSTWNDTTRANSTEVTITLPC) form a V4 region. 5 N-linked (GlcNAc...) asparagine; by host glycosylation sites follow: Asn-389, Asn-395, Asn-399, Asn-405, and Asn-458. V5 regions lie at residues 458–469 (NTTNGIEIFRPA) and 460–469 (TNGIEIFRPA). The fusion peptide stretch occupies residues 510 to 531 (AVGMLGAMFLGFLGAAGSTMGA). The interval 573-591 (KQLQARVLAVERYLKDQQL) is immunosuppression. Residues Cys-597 and Cys-603 are joined by a disulfide bond. N-linked (GlcNAc...) asparagine; by host glycans are attached at residues Asn-610, Asn-615, Asn-624, and Asn-636. A coiled-coil region spans residues 632-666 (REIDNYTHLIYTLIEESQNQQEKNEQELLELDKWA). The MPER; binding to GalCer stretch occupies residues 661–682 (ELDKWAGLWSWFSITNWLWYIR). Residues 684–704 (FIIIVGGLVGLRIVFAVLSIV) traverse the membrane as a helical segment. Topologically, residues 705-855 (NRVRQGYSPL…IRQGLERALL (151 aa)) are cytoplasmic. A YXXL motif; contains endocytosis signal motif is present at residues 711–714 (YSPL). The disordered stretch occupies residues 718-742 (TRLPTQRGPDRPEGIEEEGGERDRD). The S-palmitoyl cysteine; by host moiety is linked to residue Cys-763. The Di-leucine internalization motif motif lies at 854–855 (LL).

This sequence belongs to the HIV-1 env protein family. In terms of assembly, the mature envelope protein (Env) consists of a homotrimer of non-covalently associated gp120-gp41 heterodimers. The resulting complex protrudes from the virus surface as a spike. There seems to be as few as 10 spikes on the average virion. Interacts with host CD4, CCR5 and CXCR4. Gp120 also interacts with the C-type lectins CD209/DC-SIGN and CLEC4M/DC-SIGNR (collectively referred to as DC-SIGN(R)). Gp120 and gp41 interact with GalCer. Gp120 interacts with host ITGA4/ITGB7 complex; on CD4+ T-cells, this interaction results in rapid activation of integrin ITGAL/LFA-1, which facilitates efficient cell-to-cell spreading of HIV-1. Gp120 interacts with cell-associated heparan sulfate; this interaction increases virus infectivity on permissive cells and may be involved in infection of CD4- cells. The mature envelope protein (Env) consists of a homotrimer of non-covalently associated gp120-gp41 heterodimers. The resulting complex protrudes from the virus surface as a spike. There seems to be as few as 10 spikes on the average virion. In terms of processing, highly glycosylated by host. The high number of glycan on the protein is reffered to as 'glycan shield' because it contributes to hide protein sequence from adaptive immune system. Post-translationally, palmitoylation of the transmembrane protein and of Env polyprotein (prior to its proteolytic cleavage) is essential for their association with host cell membrane lipid rafts. Palmitoylation is therefore required for envelope trafficking to classical lipid rafts, but not for viral replication. Specific enzymatic cleavages in vivo yield mature proteins. Envelope glycoproteins are synthesized as an inactive precursor that is heavily N-glycosylated and processed likely by host cell furin in the Golgi to yield the mature SU and TM proteins. The cleavage site between SU and TM requires the minimal sequence [KR]-X-[KR]-R. About 2 of the 9 disulfide bonds of gp41 are reduced by P4HB/PDI, following binding to CD4 receptor.

The protein localises to the virion membrane. It is found in the host cell membrane. The protein resides in the host endosome membrane. In terms of biological role, oligomerizes in the host endoplasmic reticulum into predominantly trimers. In a second time, gp160 transits in the host Golgi, where glycosylation is completed. The precursor is then proteolytically cleaved in the trans-Golgi and thereby activated by cellular furin or furin-like proteases to produce gp120 and gp41. Its function is as follows. Attaches the virus to the host lymphoid cell by binding to the primary receptor CD4. This interaction induces a structural rearrangement creating a high affinity binding site for a chemokine coreceptor like CXCR4 and/or CCR5. Acts as a ligand for CD209/DC-SIGN and CLEC4M/DC-SIGNR, which are respectively found on dendritic cells (DCs), and on endothelial cells of liver sinusoids and lymph node sinuses. These interactions allow capture of viral particles at mucosal surfaces by these cells and subsequent transmission to permissive cells. HIV subverts the migration properties of dendritic cells to gain access to CD4+ T-cells in lymph nodes. Virus transmission to permissive T-cells occurs either in trans (without DCs infection, through viral capture and transmission), or in cis (following DCs productive infection, through the usual CD4-gp120 interaction), thereby inducing a robust infection. In trans infection, bound virions remain infectious over days and it is proposed that they are not degraded, but protected in non-lysosomal acidic organelles within the DCs close to the cell membrane thus contributing to the viral infectious potential during DCs' migration from the periphery to the lymphoid tissues. On arrival at lymphoid tissues, intact virions recycle back to DCs' cell surface allowing virus transmission to CD4+ T-cells. Functionally, acts as a class I viral fusion protein. Under the current model, the protein has at least 3 conformational states: pre-fusion native state, pre-hairpin intermediate state, and post-fusion hairpin state. During fusion of viral and target intracellular membranes, the coiled coil regions (heptad repeats) assume a trimer-of-hairpins structure, positioning the fusion peptide in close proximity to the C-terminal region of the ectodomain. The formation of this structure appears to drive apposition and subsequent fusion of viral and target cell membranes. Complete fusion occurs in host cell endosomes and is dynamin-dependent, however some lipid transfer might occur at the plasma membrane. The virus undergoes clathrin-dependent internalization long before endosomal fusion, thus minimizing the surface exposure of conserved viral epitopes during fusion and reducing the efficacy of inhibitors targeting these epitopes. Membranes fusion leads to delivery of the nucleocapsid into the cytoplasm. The protein is Envelope glycoprotein gp160 of Homo sapiens (Human).